A 140-amino-acid chain; its full sequence is Small ribosomal subunit protein uS12 (140 aa).

Disordered stretches follow at residues 36–56 (TYNP…MTPK) and 117–140 (TSGV…EKKE).

It belongs to the universal ribosomal protein uS12 family. As to quaternary structure, part of the 30S ribosomal subunit. Contacts proteins S8 and S17. May interact with IF1 in the 30S initiation complex.

Functionally, with S4 and S5 plays an important role in translational accuracy. Its function is as follows. Interacts with and stabilizes bases of the 16S rRNA that are involved in tRNA selection in the A site and with the mRNA backbone. Located at the interface of the 30S and 50S subunits, it traverses the body of the 30S subunit contacting proteins on the other side and probably holding the rRNA structure together. The combined cluster of proteins S8, S12 and S17 appears to hold together the shoulder and platform of the 30S subunit. The protein is Small ribosomal subunit protein uS12 of Malacoplasma penetrans (strain HF-2) (Mycoplasma penetrans).